A 161-amino-acid chain; its full sequence is Nucleotide-binding protein Mmc1_1670 (161 aa).

The protein belongs to the YajQ family.

Functionally, nucleotide-binding protein. The protein is Nucleotide-binding protein Mmc1_1670 of Magnetococcus marinus (strain ATCC BAA-1437 / JCM 17883 / MC-1).